A 362-amino-acid chain; its full sequence is P2Y purinoceptor 1 (362 aa).

Over 1–40 the chain is Extracellular; the sequence is MTEALISAALNGTQPELLAGGWAAGNATTKCSLTKTGFQF. 2 N-linked (GlcNAc...) asparagine glycosylation sites follow: asparagine 11 and asparagine 26. Disulfide bonds link cysteine 31/cysteine 285 and cysteine 113/cysteine 191. Lysine 35 lines the ADP pocket. A helical membrane pass occupies residues 41-63; the sequence is YYLPTVYILVFITGFLGNSVAIW. At 64–76 the chain is on the cytoplasmic side; sequence MFVFHMRPWSGIS. The chain crosses the membrane as a helical span at residues 77–98; that stretch reads VYMFNLALADFLYVLTLPALIF. Over 99–114 the chain is Extracellular; it reads YYFNKTDWIFGDVMCK. N-linked (GlcNAc...) asparagine glycosylation is present at asparagine 102. Residues 115–136 traverse the membrane as a helical segment; sequence LQRFIFHVNLYGSILFLTCISV. Residues 137–155 lie on the Cytoplasmic side of the membrane; the sequence is HRYTGVVHPLKSLGRLKKK. A helical transmembrane segment spans residues 156–177; that stretch reads NAVYVSSLVWALVVAVIAPILF. At 178-203 the chain is on the extracellular side; sequence YSGTGVRRNKTITCYDTTADEYLRSY. Asparagine 186 is a glycosylation site (N-linked (GlcNAc...) asparagine). Residue 192-194 participates in ADP binding; the sequence is YDT. The helical transmembrane segment at 204 to 226 threads the bilayer; it reads FVYSMCTTVFMFCIPFIVILGCY. The Cytoplasmic portion of the chain corresponds to 227–249; it reads GLIVKALIYKDLDNSPLRRKSIY. The chain crosses the membrane as a helical span at residues 250–273; sequence LVIIVLTVFAVSYLPFHVMKTLNL. ADP-binding positions include 272-276, 292-295, and arginine 299; these read NLRAR and YATY. Residues 274-292 lie on the Extracellular side of the membrane; sequence RARLDFQTPQMCAFNDKVY. Residues 293–314 form a helical membrane-spanning segment; that stretch reads ATYQVTRGLASLNSCVDPILYF. The Cytoplasmic segment spans residues 315 to 362; the sequence is LAGDTFRRRLSRATRKSSRRSEPNVQSKSEEMTLNILTEYKQNGDTSL.

Belongs to the G-protein coupled receptor 1 family. Brain, spinal cord, gastrointestinal tract, spleen and leg muscle. Is not detected in the heart, liver, stomach, lung and kidney.

It is found in the cell membrane. In terms of biological role, receptor for extracellular adenine nucleotides such as ADP. In platelets, binding to ADP leads to mobilization of intracellular calcium ions via activation of phospholipase C, a change in platelet shape, and ultimately platelet aggregation. This Gallus gallus (Chicken) protein is P2Y purinoceptor 1 (P2RY1).